The following is an 860-amino-acid chain: Endo-1,4-beta-xylanase B (860 aa).

Positions 1 to 20 are cleaved as a signal peptide; sequence MKFSSANKILFSGLVASANA. The GH10 domain occupies 21–324; it reads YDLLKDYAGD…KPVYNTLLNI (304 aa). Glu-144 acts as the Proton donor in catalysis. The active-site Nucleophile is the Glu-255. Cys-278 and Cys-284 form a disulfide bridge. N-linked (GlcNAc...) asparagine glycosylation is found at Asn-295, Asn-309, Asn-359, and Asn-374. 2 stretches are compositionally biased toward polar residues: residues 330–362 and 371–418; these read RPAS…NKSK and LPGN…NSKT. The segment at 330–793 is disordered; that stretch reads RPASSSAKTL…TKTLPGGACK (464 aa). Repeat 1 spans residues 375–382; that stretch reads KSKTLPGG. The segment at 375 to 782 is 47 X 8 AA tandem repeats of [SKN]-S-K-T-L-P-G-G; that stretch reads KSKTLPGGNS…GGKSKTLPGG (408 aa). Residue Asn-390 is glycosylated (N-linked (GlcNAc...) asparagine). Repeat unit 2 spans residues 391-398; it reads KSKTLPGG. Residue Asn-406 is glycosylated (N-linked (GlcNAc...) asparagine). 45 consecutive repeat copies span residues 415-422, 431-438, 439-446, 447-454, 455-462, 463-470, 471-478, 479-486, 487-494, 495-502, 503-510, 511-518, 519-526, 527-534, 535-542, 543-550, 551-558, 559-566, 567-574, 575-582, 583-590, 591-598, 599-606, 607-614, 615-622, 623-630, 631-638, 639-646, 647-654, 655-662, 663-670, 671-678, 679-686, 687-694, 695-702, 703-710, 711-718, 719-726, 727-734, 735-742, 743-750, 751-758, 759-766, 767-774, and 775-782. 2 stretches are compositionally biased toward polar residues: residues 461 to 474 and 485 to 498; these read GGNS…SSKT. Composition is skewed to polar residues over residues 525-546, 557-570, 581-594, and 605-618; these read GGNS…SSKT and GGNS…NSKT. Residues 645 to 666 show a composition bias toward polar residues; it reads GGNSKTLPGGNSKTLPGGSSKT. Residues 741–754 show a composition bias toward polar residues; it reads GGNSKTLPGGSSKT. In terms of domain architecture, CBM1 spans 824–860; that stretch reads NCAAKWGQCGGNGFNGPTCCQNGSRCQFVNEWYSQCL. Asn-845 carries an N-linked (GlcNAc...) asparagine glycan.

The protein belongs to the glycosyl hydrolase 10 (cellulase F) family.

Its subcellular location is the secreted. It catalyses the reaction Endohydrolysis of (1-&gt;4)-beta-D-xylosidic linkages in xylans.. Its pathway is glycan degradation; xylan degradation. Endo-1,4-beta-xylanase involved in the hydrolysis of xylan, a major structural heterogeneous polysaccharide found in plant biomass representing the second most abundant polysaccharide in the biosphere, after cellulose. Hydrolyzes both unsubstituted (oat spelts) and highly substituted (rye and wheat) forms of arabinoxylanslans. The protein is Endo-1,4-beta-xylanase B (xynB) of Neocallimastix patriciarum (Rumen fungus).